The following is a 227-amino-acid chain: Octanoyltransferase (227 aa).

Residues Glu35–Lys222 enclose the BPL/LPL catalytic domain. Substrate-binding positions include Arg80 to His87, Ala152 to Gly154, and Gly165 to Ala167. Catalysis depends on Cys183, which acts as the Acyl-thioester intermediate.

It belongs to the LipB family.

It is found in the cytoplasm. The enzyme catalyses octanoyl-[ACP] + L-lysyl-[protein] = N(6)-octanoyl-L-lysyl-[protein] + holo-[ACP] + H(+). Its pathway is protein modification; protein lipoylation via endogenous pathway; protein N(6)-(lipoyl)lysine from octanoyl-[acyl-carrier-protein]: step 1/2. Catalyzes the transfer of endogenously produced octanoic acid from octanoyl-acyl-carrier-protein onto the lipoyl domains of lipoate-dependent enzymes. Lipoyl-ACP can also act as a substrate although octanoyl-ACP is likely to be the physiological substrate. This chain is Octanoyltransferase, found in Bacteroides thetaiotaomicron (strain ATCC 29148 / DSM 2079 / JCM 5827 / CCUG 10774 / NCTC 10582 / VPI-5482 / E50).